Here is a 555-residue protein sequence, read N- to C-terminus: Glutamate--tRNA ligase (555 aa).

Positions 100–110 (PNPSGPLHIGH) match the 'HIGH' region motif.

It belongs to the class-I aminoacyl-tRNA synthetase family. Glutamate--tRNA ligase type 2 subfamily.

Its subcellular location is the cytoplasm. It carries out the reaction tRNA(Glu) + L-glutamate + ATP = L-glutamyl-tRNA(Glu) + AMP + diphosphate. Catalyzes the attachment of glutamate to tRNA(Glu) in a two-step reaction: glutamate is first activated by ATP to form Glu-AMP and then transferred to the acceptor end of tRNA(Glu). The chain is Glutamate--tRNA ligase from Methanococcus maripaludis (strain DSM 14266 / JCM 13030 / NBRC 101832 / S2 / LL).